A 431-amino-acid chain; its full sequence is MIDRYSREEMANIWTDQNRYEAWLEVEILACEAWSELGHIPKEDVKKIRQNAKVDVKRAQEIEQETRHDVVAFTRQVSETLGDERKWVHYGLTSTDVVDTALSYVIKQANEIIEKDIERFIKVLEEKAKNYKYTLMMGRTHGVHAEPTTFGVKMALWYTEMKRNLKRFKEVRKEIEVGKMSGAVGTFANIPPEIEQYVCDHLGIDTASVSTQTLQRDRHAYYIATLALVATSLEKFAVEIRNLQKTETREVEEAFAKGQKGSSAMPHKRNPIGSENITGISRVIRGYITTAYENVPLWHERDISHSSAERIMLPDVTIALDYALNRFTNIVDRLTVFEDNMRNNIDKTFGLIFSQRVLLALINKGMVREEAYDRVQPKAMESWETKTPFRQLIEKDESITNVLSKEELDECFNPEHHLNQVDTIFKRAGLE.

N(6)-(1,2-dicarboxyethyl)-AMP-binding positions include 4–5 (RY), 67–69 (RHD), and 93–94 (TS). The Proton donor/acceptor role is filled by H141. Q212 serves as a coordination point for N(6)-(1,2-dicarboxyethyl)-AMP. Catalysis depends on S262, which acts as the Proton donor/acceptor. Residues S263, 268–270 (KRN), N276, and 307–311 (SAERI) each bind N(6)-(1,2-dicarboxyethyl)-AMP.

This sequence belongs to the lyase 1 family. Adenylosuccinate lyase subfamily. As to quaternary structure, homodimer and homotetramer. Residues from neighboring subunits contribute catalytic and substrate-binding residues to each active site.

It carries out the reaction N(6)-(1,2-dicarboxyethyl)-AMP = fumarate + AMP. The enzyme catalyses (2S)-2-[5-amino-1-(5-phospho-beta-D-ribosyl)imidazole-4-carboxamido]succinate = 5-amino-1-(5-phospho-beta-D-ribosyl)imidazole-4-carboxamide + fumarate. It participates in purine metabolism; AMP biosynthesis via de novo pathway; AMP from IMP: step 2/2. Its pathway is purine metabolism; IMP biosynthesis via de novo pathway; 5-amino-1-(5-phospho-D-ribosyl)imidazole-4-carboxamide from 5-amino-1-(5-phospho-D-ribosyl)imidazole-4-carboxylate: step 2/2. Functionally, catalyzes two reactions in de novo purine nucleotide biosynthesis. Catalyzes the breakdown of 5-aminoimidazole- (N-succinylocarboxamide) ribotide (SAICAR or 2-[5-amino-1-(5-phospho-beta-D-ribosyl)imidazole-4-carboxamido]succinate) to 5-aminoimidazole-4-carboxamide ribotide (AICAR or 5-amino-1-(5-phospho-beta-D-ribosyl)imidazole-4-carboxamide) and fumarate, and of adenylosuccinate (ADS or N(6)-(1,2-dicarboxyethyl)-AMP) to adenosine monophosphate (AMP) and fumarate. The polypeptide is Adenylosuccinate lyase (purB) (Staphylococcus haemolyticus (strain JCSC1435)).